A 196-amino-acid polypeptide reads, in one-letter code: Xanthine phosphoribosyltransferase (196 aa).

Positions 20 and 27 each coordinate xanthine. Residue 128–132 (ATGAA) coordinates 5-phospho-alpha-D-ribose 1-diphosphate. Lys156 contributes to the xanthine binding site.

The protein belongs to the purine/pyrimidine phosphoribosyltransferase family. Xpt subfamily. In terms of assembly, homodimer.

Its subcellular location is the cytoplasm. The enzyme catalyses XMP + diphosphate = xanthine + 5-phospho-alpha-D-ribose 1-diphosphate. The protein operates within purine metabolism; XMP biosynthesis via salvage pathway; XMP from xanthine: step 1/1. Its function is as follows. Converts the preformed base xanthine, a product of nucleic acid breakdown, to xanthosine 5'-monophosphate (XMP), so it can be reused for RNA or DNA synthesis. This is Xanthine phosphoribosyltransferase from Brevibacillus brevis (strain 47 / JCM 6285 / NBRC 100599).